Reading from the N-terminus, the 281-residue chain is MDFFNKFSQGLAESSTPKSSIYYSEEKDPDTKKDEAIEIGLKSQESYYQRQLREQLARDNMTVASRQPIQPLQPTIHITPQPVPTATPAPILLPSSTVPTPKPRQQTNTSSDMSNLFDWLSEDTDAPASSLLPALTPSNAVQDIISKFNKDQKTTTPPSTQPSQTLPTTTCTQQSDGNISCTTPTVTPPQPPIVATVCTPTPTGGTVCTTAQQNPNPGAASQQNLDDMALKDLMSNVERDMHQLQAETNDLVTNVYDAREYTRRAIDQILQLVKGFERFQK.

Polar residues predominate over residues Met1–Tyr22. Disordered stretches follow at residues Met1–Lys33, Leu93–Asp112, and Asn149–Pro188. Positions Ser24–Lys33 are enriched in basic and acidic residues. The span at Pro94–Asp112 shows a compositional bias: polar residues. Positions Thr154–Ser175 are enriched in low complexity.

It belongs to the orthopoxvirus OPG130 family. In terms of assembly, interacts with OPG136 and its cleaved form. In terms of processing, its phosphorylation state is regulated by the OPG054 kinase and the OPG106 phosphatase.

It is found in the virion. It localises to the host endoplasmic reticulum-Golgi intermediate compartment membrane. Component of the virion core. Participates in virion assembly. This chain is 39kDa core protein OPG130 (OPG130), found in Vaccinia virus (strain Western Reserve) (VACV).